We begin with the raw amino-acid sequence, 145 residues long: Copper transporter 4 (145 aa).

2 consecutive transmembrane segments (helical) span residues 53 to 73 (GMYALALIFVFFLAFLAEWLA) and 106 to 126 (YLVILAVVSFNGGVFLAAIFG).

This sequence belongs to the copper transporter (Ctr) (TC 1.A.56) family. SLC31A subfamily. As to expression, highly expressed in roots and at lower levels in leaves, stems and flowers.

The protein resides in the membrane. Involved in the transport of copper. This chain is Copper transporter 4 (COPT4), found in Arabidopsis thaliana (Mouse-ear cress).